A 298-amino-acid chain; its full sequence is Mitochondrial dicarboxylate/tricarboxylate transporter DTC (298 aa).

Solcar repeat units lie at residues 12–93 (WTTV…LTAK), 103–194 (LPLY…SAEY), and 202–292 (GEMS…ITKF). Transmembrane regions (helical) follow at residues 18-38 (FVNG…IDMI), 68-88 (GLSA…GSFK), 109-129 (ALCG…ADLA), 169-189 (GCGP…ASYD), 208-228 (VGAS…FDFV), and 268-288 (FPVY…FLNQ).

It belongs to the mitochondrial carrier (TC 2.A.29) family. In terms of tissue distribution, highly expressed in flower buds and at lower levels in roots, leaves and stems.

The protein resides in the mitochondrion inner membrane. Catalyzes the transport of dicarboxylates, such as oxoglutarate, oxaloacetate, malate, and succinate, and of tricarboxylates, such as citrate, isocitrate, cis-aconitate, and trans-aconitate by a counter-exchange mechanism across the inner mitochondrial membrane. Substrate preference in reconstituted proteoliposomes is oxaloacetate &gt; malonate &gt; malate &gt; maleate &gt; succinate &gt; oxoglutarate &gt; citrate &gt; trans-aconitate &gt; cis-aconitate &gt; sulfate &gt; isocitrate. May be important for plant metabolic functions requiring organic acid flux to or from the mitochondria, such as nitrogen assimilation, export of reducing equivalents from the mitochondria, and fatty acid elongation. The sequence is that of Mitochondrial dicarboxylate/tricarboxylate transporter DTC (DTC) from Arabidopsis thaliana (Mouse-ear cress).